A 205-amino-acid polypeptide reads, in one-letter code: Probable GTP-binding protein EngB (205 aa).

Residues 27-201 form the EngB-type G domain; sequence SGIEIAFAGR…AAKLDSWFAP (175 aa). GTP is bound by residues 35–42, 62–66, 80–83, 147–150, and 180–182; these read GRSNAGKS, GRTQL, DLPG, TKAD, and FSA. Serine 42 and threonine 64 together coordinate Mg(2+).

The protein belongs to the TRAFAC class TrmE-Era-EngA-EngB-Septin-like GTPase superfamily. EngB GTPase family. Mg(2+) is required as a cofactor.

Its function is as follows. Necessary for normal cell division and for the maintenance of normal septation. This chain is Probable GTP-binding protein EngB, found in Pasteurella multocida (strain Pm70).